Here is a 277-residue protein sequence, read N- to C-terminus: Large ribosomal subunit protein uL2 (277 aa).

Positions Val223–Thr264 are disordered.

It belongs to the universal ribosomal protein uL2 family. Part of the 50S ribosomal subunit. Forms a bridge to the 30S subunit in the 70S ribosome.

One of the primary rRNA binding proteins. Required for association of the 30S and 50S subunits to form the 70S ribosome, for tRNA binding and peptide bond formation. It has been suggested to have peptidyltransferase activity; this is somewhat controversial. Makes several contacts with the 16S rRNA in the 70S ribosome. This chain is Large ribosomal subunit protein uL2, found in Nitrosomonas eutropha (strain DSM 101675 / C91 / Nm57).